The chain runs to 491 residues: Glutamyl-tRNA(Gln) amidotransferase subunit A (491 aa).

Active-site charge relay system residues include K79 and S158. S182 functions as the Acyl-ester intermediate in the catalytic mechanism.

This sequence belongs to the amidase family. GatA subfamily. As to quaternary structure, heterotrimer of A, B and C subunits.

It carries out the reaction L-glutamyl-tRNA(Gln) + L-glutamine + ATP + H2O = L-glutaminyl-tRNA(Gln) + L-glutamate + ADP + phosphate + H(+). Its function is as follows. Allows the formation of correctly charged Gln-tRNA(Gln) through the transamidation of misacylated Glu-tRNA(Gln) in organisms which lack glutaminyl-tRNA synthetase. The reaction takes place in the presence of glutamine and ATP through an activated gamma-phospho-Glu-tRNA(Gln). The protein is Glutamyl-tRNA(Gln) amidotransferase subunit A of Anaplasma phagocytophilum (strain HZ).